The following is a 244-amino-acid chain: Phosphoadenosine 5'-phosphosulfate reductase (244 aa).

The active-site Nucleophile; cysteine thiosulfonate intermediate is C239.

This sequence belongs to the PAPS reductase family. CysH subfamily.

The protein resides in the cytoplasm. It catalyses the reaction [thioredoxin]-disulfide + sulfite + adenosine 3',5'-bisphosphate + 2 H(+) = [thioredoxin]-dithiol + 3'-phosphoadenylyl sulfate. It functions in the pathway sulfur metabolism; hydrogen sulfide biosynthesis; sulfite from sulfate: step 3/3. Its function is as follows. Catalyzes the formation of sulfite from phosphoadenosine 5'-phosphosulfate (PAPS) using thioredoxin as an electron donor. The sequence is that of Phosphoadenosine 5'-phosphosulfate reductase from Yersinia pseudotuberculosis serotype O:1b (strain IP 31758).